The primary structure comprises 379 residues: Flagellar P-ring protein (379 aa).

An N-terminal signal peptide occupies residues 1–32 (MTAPAGFLPRVGRLIAVALTAVFLLAPTGAEA).

It belongs to the FlgI family. As to quaternary structure, the basal body constitutes a major portion of the flagellar organelle and consists of four rings (L,P,S, and M) mounted on a central rod.

It is found in the periplasm. Its subcellular location is the bacterial flagellum basal body. Its function is as follows. Assembles around the rod to form the L-ring and probably protects the motor/basal body from shearing forces during rotation. The sequence is that of Flagellar P-ring protein from Rhodospirillum rubrum (strain ATCC 11170 / ATH 1.1.1 / DSM 467 / LMG 4362 / NCIMB 8255 / S1).